We begin with the raw amino-acid sequence, 253 residues long: Ubiquinone/menaquinone biosynthesis C-methyltransferase UbiE (253 aa).

Residues threonine 76, aspartate 97, and 125 to 126 contribute to the S-adenosyl-L-methionine site; that span reads NA.

Belongs to the class I-like SAM-binding methyltransferase superfamily. MenG/UbiE family.

The catalysed reaction is a 2-demethylmenaquinol + S-adenosyl-L-methionine = a menaquinol + S-adenosyl-L-homocysteine + H(+). It catalyses the reaction a 2-methoxy-6-(all-trans-polyprenyl)benzene-1,4-diol + S-adenosyl-L-methionine = a 5-methoxy-2-methyl-3-(all-trans-polyprenyl)benzene-1,4-diol + S-adenosyl-L-homocysteine + H(+). The protein operates within quinol/quinone metabolism; menaquinone biosynthesis; menaquinol from 1,4-dihydroxy-2-naphthoate: step 2/2. It functions in the pathway cofactor biosynthesis; ubiquinone biosynthesis. Its function is as follows. Methyltransferase required for the conversion of demethylmenaquinol (DMKH2) to menaquinol (MKH2) and the conversion of 2-polyprenyl-6-methoxy-1,4-benzoquinol (DDMQH2) to 2-polyprenyl-3-methyl-6-methoxy-1,4-benzoquinol (DMQH2). The sequence is that of Ubiquinone/menaquinone biosynthesis C-methyltransferase UbiE from Rhodopseudomonas palustris (strain HaA2).